A 381-amino-acid chain; its full sequence is CCN family member 1 (381 aa).

A signal peptide spans 1-24 (MSSRIARALALVVTLLHLTRLALS). The IGFBP N-terminal domain maps to 25–94 (TCPAACHCPL…TALKGICRAQ (70 aa)). 6 disulfide bridges follow: cysteine 26-cysteine 50, cysteine 30-cysteine 52, cysteine 32-cysteine 53, cysteine 39-cysteine 56, cysteine 64-cysteine 78, and cysteine 70-cysteine 91. A VWFC domain is found at 98-164 (RPCEYNSRIY…GQCCEEWVCD (67 aa)). Serine 188 carries the phosphoserine; by FAM20C modification. A TSP type-1 domain is found at 228-273 (KCIVQTTSWSQCSKTCGTGISTRVTNDNPECRLVKETRICEVRPCG). Residues 279–315 (SLKKGKKCSKTKKSPEPVRFTYAGCLSVKKYRPKYCG) are heparin-binding. Cystine bridges form between cysteine 286/cysteine 323, cysteine 303/cysteine 337, cysteine 314/cysteine 353, cysteine 317/cysteine 355, and cysteine 322/cysteine 359. The region spanning 286–360 (CSKTKKSPEP…QSCKCNYNCP (75 aa)) is the CTCK domain.

The protein belongs to the CCN family. As to quaternary structure, interaction with integrins is heparin- and cell-type-dependent and promotes cell adhesion. In skin fibroblasts it binds ITGA6/ITGB1, in endothelial cells, binds ITGAV/ITGB3 and in platelets, ITGA2B/ITGB3. Binds, in vitro, ITGAV/ITGB5.

It localises to the secreted. Promotes cell proliferation, chemotaxis, angiogenesis and cell adhesion. Appears to play a role in wound healing by up-regulating, in skin fibroblasts, the expression of a number of genes involved in angiogenesis, inflammation and matrix remodeling including VEGA-A, VEGA-C, MMP1, MMP3, TIMP1, uPA, PAI-1 and integrins alpha-3 and alpha-5. CCN1-mediated gene regulation is dependent on heparin-binding. Down-regulates the expression of alpha-1 and alpha-2 subunits of collagen type-1. Promotes cell adhesion and adhesive signaling through integrin alpha-6/beta-1, cell migration through integrin alpha-v/beta-5 and cell proliferation through integrin alpha-v/beta-3. The protein is CCN family member 1 of Homo sapiens (Human).